A 306-amino-acid polypeptide reads, in one-letter code: Glutaminase (306 aa).

Substrate is bound by residues Ser64, Asn115, Glu159, Asn166, Tyr190, Tyr242, and Val260.

It belongs to the glutaminase family. In terms of assembly, homotetramer.

It catalyses the reaction L-glutamine + H2O = L-glutamate + NH4(+). The chain is Glutaminase from Aeromonas salmonicida (strain A449).